The sequence spans 122 residues: Large ribosomal subunit protein bL12 (122 aa).

This sequence belongs to the bacterial ribosomal protein bL12 family. As to quaternary structure, homodimer. Part of the ribosomal stalk of the 50S ribosomal subunit. Forms a multimeric L10(L12)X complex, where L10 forms an elongated spine to which 2 to 4 L12 dimers bind in a sequential fashion. Binds GTP-bound translation factors.

Its function is as follows. Forms part of the ribosomal stalk which helps the ribosome interact with GTP-bound translation factors. Is thus essential for accurate translation. This Blochmanniella pennsylvanica (strain BPEN) protein is Large ribosomal subunit protein bL12.